Reading from the N-terminus, the 283-residue chain is Probable 3-deoxy-manno-octulosonic acid transferase (283 aa).

Its subcellular location is the cytoplasm. It catalyses the reaction an alpha-Kdo-(2-&gt;4)-alpha-Kdo-(2-&gt;6)-lipid IVA + CMP-3-deoxy-beta-D-manno-octulosonate = an alpha-Kdo-(2-&gt;4)-alpha-Kdo-(2-&gt;4)-alpha-Kdo-(2-&gt;6)-lipid IVA + CMP + H(+). The catalysed reaction is alpha-Kdo-(2-&gt;4)-alpha-Kdo-(2-&gt;6)-lipid IVA (E. coli) + CMP-3-deoxy-beta-D-manno-octulosonate = alpha-Kdo-(2-&gt;4)-alpha-Kdo-(2-&gt;4)-alpha-Kdo-(2-&gt;6)-lipid IVA + CMP + H(+). Its pathway is bacterial outer membrane biogenesis; LPS core biosynthesis. It functions in the pathway bacterial outer membrane biogenesis; LOS core biosynthesis. Involved in the biosynthesis of the core oligosaccharide region of lipopolysaccharide (LPS). Required for the addition of 3-deoxy-D-manno-oct-2-ulosonic acid III (KdoIII) to the KdoII residue of the inner lipopolysaccharide core. May also play a role in a lipooligosaccharide (LOS) biosynthesis pathway. This is Probable 3-deoxy-manno-octulosonic acid transferase from Escherichia coli (strain K12).